The following is a 410-amino-acid chain: uncharacterized protein (410 aa).

Residue H87 coordinates Zn(2+). D89 is a catalytic residue. D120 serves as a coordination point for Zn(2+). E154 serves as the catalytic Proton acceptor. The Zn(2+) site is built by E155, D184, and H387.

This sequence belongs to the peptidase M20A family. It depends on Zn(2+) as a cofactor. The cofactor is Co(2+).

This is an uncharacterized protein from Methanocaldococcus jannaschii (strain ATCC 43067 / DSM 2661 / JAL-1 / JCM 10045 / NBRC 100440) (Methanococcus jannaschii).